A 404-amino-acid chain; its full sequence is uncharacterized protein (404 aa).

Disordered stretches follow at residues 261–307 and 320–340; these read VSTG…SPSL and KKSH…GGAD. 3 positions are modified to phosphoserine: Ser267, Ser276, and Ser279. Residues Thr290 and Thr293 each carry the phosphothreonine modification. A phosphoserine mark is found at Ser304, Ser306, Ser324, Ser358, and Ser362. The span at 320–336 shows a compositional bias: basic and acidic residues; it reads KKSHSANDSEEFFREDD.

This is an uncharacterized protein from Homo sapiens (Human).